The chain runs to 351 residues: Pleckstrin (351 aa).

Residues 4-101 (KRIREGYLVK…WVRDTKKAIK (98 aa)) form the PH 1 domain. K64 is subject to N6-acetyllysine. Phosphoserine occurs at positions 113 and 117. The 86-residue stretch at 136 to 221 (IEKGIKELNL…NPDAFYYFPD (86 aa)) folds into the DEP domain. Residues 244–348 (VIIKQGCLLK…WIKAIQVASR (105 aa)) enclose the PH 2 domain.

Its function is as follows. Major protein kinase C substrate of platelets. This chain is Pleckstrin (PLEK), found in Canis lupus familiaris (Dog).